A 205-amino-acid chain; its full sequence is Small ribosomal subunit protein uS4c (205 aa).

Residues 16–40 (GKLPSLTNKTSKKRKSPGQPATSFK) are disordered. The 69-residue stretch at 93-161 (MRLDNIVHRI…IQKNIESKEL (69 aa)) folds into the S4 RNA-binding domain.

This sequence belongs to the universal ribosomal protein uS4 family. Part of the 30S ribosomal subunit. Contacts protein S5. The interaction surface between S4 and S5 is involved in control of translational fidelity.

The protein localises to the plastid. It localises to the chloroplast. One of the primary rRNA binding proteins, it binds directly to 16S rRNA where it nucleates assembly of the body of the 30S subunit. Functionally, with S5 and S12 plays an important role in translational accuracy. The protein is Small ribosomal subunit protein uS4c (rps4) of Euglena gracilis.